A 955-amino-acid polypeptide reads, in one-letter code: B3 domain-containing protein Os07g0563300 (955 aa).

Composition is skewed to pro residues over residues 1–20 (MSSP…PPPS) and 29–45 (VQPP…PQQP). 2 disordered regions span residues 1-81 (MSSP…QRPR) and 325-392 (ARKG…SSSL). The segment covering 62 to 71 (QHQQQQQGPP) has biased composition (low complexity). Over residues 332–342 (DPCSSVSTTFK) the composition is skewed to polar residues. A compositionally biased stretch (basic and acidic residues) spans 343–355 (LDSHHPSILKDDP). Residues 382 to 392 (QQQQQMASSSL) are compositionally biased toward low complexity. The TF-B3 DNA-binding region spans 453–554 (FEKMLSASDA…KLVMGFRKAT (102 aa)). Polar residues-rich tracts occupy residues 556–565 (LSAEQDQPTK) and 598–608 (NTESKSSSPVE). The disordered stretch occupies residues 556–642 (LSAEQDQPTK…PLPVKRKATS (87 aa)). The segment at 708-758 (SGENHQWAQCEDCSKWRKLPVDALLPSKWTCSDNKWDSERSSCDSAQEINM) adopts a CW-type zinc-finger fold. Positions 717, 720, 738, and 750 each coordinate Zn(2+). Positions 856-955 (MMRREKRQQS…ATRLLRDNPT (100 aa)) are disordered. A compositionally biased stretch (basic and acidic residues) spans 862–877 (RQQSEKDSGVPRKREP). Composition is skewed to polar residues over residues 878 to 900 (GQSS…SSPH) and 920 to 933 (TSSP…LNSQ). Positions 939-955 (EQSPKSDATRLLRDNPT) are enriched in basic and acidic residues.

It is found in the nucleus. The protein is B3 domain-containing protein Os07g0563300 of Oryza sativa subsp. japonica (Rice).